The sequence spans 335 residues: Tryptophan--tRNA ligase (335 aa).

Residues 13–15 (QPS) and 21–22 (GN) contribute to the ATP site. The 'HIGH' region motif lies at 14–22 (PSGELTIGN). Asp-138 is an L-tryptophan binding site. Residues 150 to 152 (GKD), Ile-189, and 198 to 202 (KMSKS) contribute to the ATP site. Residues 198 to 202 (KMSKS) carry the 'KMSKS' region motif.

Belongs to the class-I aminoacyl-tRNA synthetase family. As to quaternary structure, homodimer.

The protein resides in the cytoplasm. It carries out the reaction tRNA(Trp) + L-tryptophan + ATP = L-tryptophyl-tRNA(Trp) + AMP + diphosphate + H(+). Functionally, catalyzes the attachment of tryptophan to tRNA(Trp). This chain is Tryptophan--tRNA ligase, found in Clostridium acetobutylicum (strain ATCC 824 / DSM 792 / JCM 1419 / IAM 19013 / LMG 5710 / NBRC 13948 / NRRL B-527 / VKM B-1787 / 2291 / W).